The following is a 241-amino-acid chain: Tubulin-like protein alpha-4B (241 aa).

Basic and acidic residues predominate over residues 1–10 (MRHQQTERQD). The disordered stretch occupies residues 1–20 (MRHQQTERQDPSQPLSRQHG). A GTP-binding site is contributed by Asp10. Asp10 is a binding site for Mg(2+). Positions 11-20 (PSQPLSRQHG) are enriched in polar residues. GTP is bound by residues Ser79, Gly83, Thr84, Thr118, Asn145, and Asn167. Glu193 is a catalytic residue.

This sequence belongs to the tubulin family. Mg(2+) serves as cofactor. Some glutamate residues at the C-terminus are polyglutamylated, resulting in polyglutamate chains on the gamma-carboxyl group. Polyglutamylation plays a key role in microtubule severing by spastin (SPAST). SPAST preferentially recognizes and acts on microtubules decorated with short polyglutamate tails: severing activity by SPAST increases as the number of glutamates per tubulin rises from one to eight, but decreases beyond this glutamylation threshold. Glutamylation is also involved in cilia motility. In terms of processing, some glutamate residues at the C-terminus are monoglycylated but not polyglycylated due to the absence of functional TTLL10 in human. Monoglycylation is mainly limited to tubulin incorporated into cilia and flagella axonemes, which is required for their stability and maintenance. Flagella glycylation controls sperm motility. Both polyglutamylation and monoglycylation can coexist on the same protein on adjacent residues, and lowering glycylation levels increases polyglutamylation, and reciprocally.

The protein resides in the cytoplasm. The protein localises to the cytoskeleton. It carries out the reaction GTP + H2O = GDP + phosphate + H(+). Tubulin is the major constituent of microtubules, a cylinder consisting of laterally associated linear protofilaments composed ofalpha- and beta-tubulin heterodimers. The polypeptide is Tubulin-like protein alpha-4B (TUBA4B) (Homo sapiens (Human)).